A 485-amino-acid polypeptide reads, in one-letter code: Adenosylhomocysteinase (485 aa).

Substrate contacts are provided by Thr64, Asp139, and Glu205. Position 206–208 (206–208 (TTT)) interacts with NAD(+). Residues Lys235 and Asp239 each coordinate substrate. NAD(+)-binding positions include Asn240, 269-274 (GYGDVG), Glu292, Asn327, 348-350 (IGH), and Asn397.

It belongs to the adenosylhomocysteinase family. Homotetramer. It depends on NAD(+) as a cofactor. In terms of tissue distribution, mainly in floral buds and stems.

It catalyses the reaction S-adenosyl-L-homocysteine + H2O = L-homocysteine + adenosine. It functions in the pathway amino-acid biosynthesis; L-homocysteine biosynthesis; L-homocysteine from S-adenosyl-L-homocysteine: step 1/1. Functionally, adenosylhomocysteine is a competitive inhibitor of S-adenosyl-L-methionine-dependent methyl transferase reactions; therefore adenosylhomocysteinase may play a key role in the control of methylations via regulation of the intracellular concentration of adenosylhomocysteine. The sequence is that of Adenosylhomocysteinase (SAHH) from Petroselinum crispum (Parsley).